Reading from the N-terminus, the 363-residue chain is Peptide chain release factor 2 (363 aa).

Position 251 is an N5-methylglutamine (Gln251).

This sequence belongs to the prokaryotic/mitochondrial release factor family. Post-translationally, methylated by PrmC. Methylation increases the termination efficiency of RF2.

The protein localises to the cytoplasm. In terms of biological role, peptide chain release factor 2 directs the termination of translation in response to the peptide chain termination codons UGA and UAA. The polypeptide is Peptide chain release factor 2 (Helicobacter pylori (strain HPAG1)).